The sequence spans 666 residues: Semaphorin-7A (666 aa).

The tract at residues 1–21 (MTPPPPGRAAPSAPRARVPGP) is disordered. An N-terminal signal peptide occupies residues 1–44 (MTPPPPGRAAPSAPRARVPGPPARLGLPLRLRLLLLLWAAAASA). Residues 9-21 (AAPSAPRARVPGP) show a composition bias toward low complexity. In terms of domain architecture, Sema spans 53-490 (RIFAVWKGHV…SQWEVSQVPL (438 aa)). N105 carries an N-linked (GlcNAc...) asparagine glycan. C120 and C126 form a disulfide bridge. R135 carries the asymmetric dimethylarginine modification. A disulfide bridge links C143 with C152. N-linked (GlcNAc...) asparagine glycans are attached at residues N157 and N258. 7 cysteine pairs are disulfide-bonded: C266–C366, C291–C335, C493–C511, C500–C541, C503–C518, C566–C613, and C587–C596. The interaction with integrins stretch occupies residues 267–269 (RGD). The short motif at 267-269 (RGD) is the Cell attachment site element. An N-linked (GlcNAc...) asparagine glycan is attached at N330. Residues 544–629 (PKPDKAPLQK…YFREAQHWQL (86 aa)) form the Ig-like C2-type domain. N602 carries N-linked (GlcNAc...) asparagine glycosylation. A648 carries the GPI-anchor amidated alanine lipid modification. The propeptide at 649-666 (ASLWLGVLPTLTLGLLVH) is removed in mature form.

The protein belongs to the semaphorin family. Interacts with ITGA1 and ITGB1. Interacts with PLXNC1. In terms of tissue distribution, detected in skin keratinocytes and on endothelial cells from skin blood vessels (at protein level). Expressed in fibroblasts, keratinocytes, melanocytes, placenta, testis, ovary, spleen, brain, spinal cord, lung, heart, adrenal gland, lymph nodes, thymus, intestine and kidney.

Its subcellular location is the cell membrane. Its function is as follows. Plays an important role in integrin-mediated signaling and functions both in regulating cell migration and immune responses. Promotes formation of focal adhesion complexes, activation of the protein kinase PTK2/FAK1 and subsequent phosphorylation of MAPK1 and MAPK3. Promotes production of pro-inflammatory cytokines by monocytes and macrophages. Plays an important role in modulating inflammation and T-cell-mediated immune responses. Promotes axon growth in the embryonic olfactory bulb. Promotes attachment, spreading and dendrite outgrowth in melanocytes. This is Semaphorin-7A (SEMA7A) from Homo sapiens (Human).